Here is a 505-residue protein sequence, read N- to C-terminus: Peroxisome proliferator-activated receptor gamma (505 aa).

An O-linked (GlcNAc) threonine glycan is attached at T84. Position 112 is a phosphoserine; by MAPK (S112). A DNA-binding region (nuclear receptor) is located at residues 136-210 (AIECRVCGDK…VGMSHNAIRF (75 aa)). 2 NR C4-type zinc fingers span residues 139–159 (CRVC…CEGC) and 176–198 (CDLN…FQKC). The interaction with FAM120B stretch occupies residues 205–280 (HNAIRFGRMP…DKSPFVIYDM (76 aa)). One can recognise an NR LBD domain in the interval 238–503 (DLRALAKHLY…HPLLQEIYKD (266 aa)). K252 participates in a covalent cross-link: Glycyl lysine isopeptide (Lys-Gly) (interchain with G-Cter in ubiquitin). The 9aaTAD signature appears at 495–503 (PLLQEIYKD).

This sequence belongs to the nuclear hormone receptor family. NR1 subfamily. As to quaternary structure, heterodimer with other nuclear receptors, such as RXRA. The heterodimer with the retinoic acid receptor RXRA is called adipocyte-specific transcription factor ARF6. Interacts with NCOA6 coactivator, leading to a strong increase in transcription of target genes. Interacts with coactivator PPARBP, leading to a mild increase in transcription of target genes. Interacts with NOCA7 in a ligand-inducible manner. Interacts with NCOA1 and NCOA2 LXXLL motifs. Interacts with ASXL1, ASXL2, DNTTIP2, FAM120B, MAP2K1/MEK1, NR0B2, PDPK1, PRDM16, PRMT2 and TGFB1I1. Interacts (when activated by agonist) with PPP5C. Interacts with HELZ2 and THRAP3; the interaction stimulates the transcriptional activity of PPARG. Interacts with PER2, the interaction is ligand dependent and blocks PPARG recruitment to target promoters. Interacts with NOCT. Interacts with FOXO1 (acetylated form). Interacts with ACTN4. Interacts (when in the liganded conformation) with GPS2. Interacts with CRY1 and CRY2 in a ligand-dependent manner. In the absence of hormonal ligand, interacts with TACC1. In macrophages, interacts with PAQR3 and STUB1; the interactions promote PPARG poylubiquitination and STUB1-mediated degradation. Post-translationally, O-GlcNAcylation at Thr-84 reduces transcriptional activity in adipocytes. In terms of processing, phosphorylated in basal conditions and dephosphorylated when treated with the ligand. May be dephosphorylated by PPP5C. The phosphorylated Ser-112 form is recognized by PER2 and repressed, dephosphorylation at Ser-112 induces adipogenic activity. Ser-112 phosphorylation levels are reduced by 65% in brown adipose tissue compared to white adipose tissue. Ubiquitinated by E3 ubiquitin-protein ligase complex containing FBXO9; leading to proteasomal degradation. Post-translationally, ubiquitinated by E3 ubiquitin-protein ligase complex containing FBXO9; leading to proteasomal degradation. Ubiquitinated at Lys-252 by TRIM55 leading to proteasomal degradation. Ubiquitinated by E3 ubiquitin-protein ligase STUB1/CHIP; leading to proteasomal degradation. Highest expression in white and brown adipose tissue. Also found in liver, skeletal muscle, heart, adrenal gland, spleen, kidney and intestine. Isoform 2 is more abundant than isoform 1 in adipose tissue.

The protein localises to the nucleus. The protein resides in the cytoplasm. PDPK1 activates its transcriptional activity independently of its kinase activity. Functionally, nuclear receptor that binds peroxisome proliferators such as hypolipidemic drugs and fatty acids. Once activated by a ligand, the nuclear receptor binds to DNA specific PPAR response elements (PPRE) and modulates the transcription of its target genes, such as acyl-CoA oxidase. It therefore controls the peroxisomal beta-oxidation pathway of fatty acids. Key regulator of adipocyte differentiation and glucose homeostasis. ARF6 acts as a key regulator of the tissue-specific adipocyte P2 (aP2) enhancer. Acts as a critical regulator of gut homeostasis by suppressing NF-kappa-B-mediated pro-inflammatory responses. Plays a role in the regulation of cardiovascular circadian rhythms by regulating the transcription of BMAL1 in the blood vessels. This Mus musculus (Mouse) protein is Peroxisome proliferator-activated receptor gamma (Pparg).